We begin with the raw amino-acid sequence, 83 residues long: Small ribosomal subunit protein uS17 (83 aa).

This sequence belongs to the universal ribosomal protein uS17 family. As to quaternary structure, part of the 30S ribosomal subunit.

In terms of biological role, one of the primary rRNA binding proteins, it binds specifically to the 5'-end of 16S ribosomal RNA. The polypeptide is Small ribosomal subunit protein uS17 (Chlamydia abortus (strain DSM 27085 / S26/3) (Chlamydophila abortus)).